Reading from the N-terminus, the 218-residue chain is MATRSPGVVISDDEPGYDLDLFCIPNHYAEDLERVFIPHGLIMDRTERLARDVMKEMGGHHIVALCVLKGGYKFFADLLDYIKALNRNSDRSIPMTVDFIRLKSYCNDQSTGDTKVIGGDDLSTLTGKNVLIVEDIIDTGKTMQTLLSLVRQYNPKMVKVASLLVKRTPRSVGYKPDFVGFEIPDKFVVGYALDYNEYFRDLNHVCVISETGKAKYKA.

A2 is modified (N-acetylalanine). K69 is a binding site for GMP. Residue K103 is modified to N6-acetyllysine. K115 is covalently cross-linked (Glycyl lysine isopeptide (Lys-Gly) (interchain with G-Cter in SUMO1); alternate). K115 participates in a covalent cross-link: Glycyl lysine isopeptide (Lys-Gly) (interchain with G-Cter in SUMO2); alternate. GMP is bound by residues 134 to 142 (EDIIDTGKT), K166, 186 to 188 (KFV), and D194. D138 (proton acceptor) is an active-site residue. At T142 the chain carries Phosphothreonine. D194 provides a ligand contact to Mg(2+).

Belongs to the purine/pyrimidine phosphoribosyltransferase family. As to quaternary structure, homotetramer. Mg(2+) is required as a cofactor.

It localises to the cytoplasm. It carries out the reaction IMP + diphosphate = hypoxanthine + 5-phospho-alpha-D-ribose 1-diphosphate. The enzyme catalyses GMP + diphosphate = guanine + 5-phospho-alpha-D-ribose 1-diphosphate. It functions in the pathway purine metabolism; IMP biosynthesis via salvage pathway; IMP from hypoxanthine: step 1/1. Converts guanine to guanosine monophosphate, and hypoxanthine to inosine monophosphate. Transfers the 5-phosphoribosyl group from 5-phosphoribosylpyrophosphate onto the purine. Plays a central role in the generation of purine nucleotides through the purine salvage pathway. This chain is Hypoxanthine-guanine phosphoribosyltransferase (HPRT1), found in Pan troglodytes (Chimpanzee).